The chain runs to 172 residues: Small ribosomal subunit protein uS5 (172 aa).

The S5 DRBM domain occupies 17–80 (LKEKMIAVNR…EEARRNMTKV (64 aa)).

Belongs to the universal ribosomal protein uS5 family. Part of the 30S ribosomal subunit. Contacts proteins S4 and S8.

Functionally, with S4 and S12 plays an important role in translational accuracy. In terms of biological role, located at the back of the 30S subunit body where it stabilizes the conformation of the head with respect to the body. The chain is Small ribosomal subunit protein uS5 from Polaromonas sp. (strain JS666 / ATCC BAA-500).